We begin with the raw amino-acid sequence, 396 residues long: Large ribosomal subunit protein uL24m (396 aa).

The interval 374–396 is disordered; it reads QLSLGGGQEDAATTTSPEQPKVV. The span at 384-396 shows a compositional bias: polar residues; sequence AATTTSPEQPKVV.

The protein belongs to the universal ribosomal protein uL24 family. As to quaternary structure, component of the mitochondrial large ribosomal subunit (mt-LSU). Mature N.crassa 74S mitochondrial ribosomes consist of a small (37S) and a large (54S) subunit. The 37S small subunit contains a 16S ribosomal RNA (16S mt-rRNA) and 32 different proteins. The 54S large subunit contains a 23S rRNA (23S mt-rRNA) and 42 different proteins. uL24m forms the wall of the exit tunnel.

It is found in the mitochondrion. Component of the mitochondrial ribosome (mitoribosome), a dedicated translation machinery responsible for the synthesis of mitochondrial genome-encoded proteins, including at least some of the essential transmembrane subunits of the mitochondrial respiratory chain. The mitoribosomes are attached to the mitochondrial inner membrane and translation products are cotranslationally integrated into the membrane. This chain is Large ribosomal subunit protein uL24m (mrpl40), found in Neurospora crassa (strain ATCC 24698 / 74-OR23-1A / CBS 708.71 / DSM 1257 / FGSC 987).